The primary structure comprises 661 residues: B3 domain-containing protein Os12g0591400 (661 aa).

4 DNA-binding regions (TF-B3) span residues 2–95 (GDQK…FNPS), 197–290 (KTRC…FNPS), 437–535 (LYIT…FKES), and 562–658 (TNLT…IRKG).

It is found in the nucleus. This chain is B3 domain-containing protein Os12g0591400, found in Oryza sativa subsp. japonica (Rice).